The following is a 344-amino-acid chain: Ferrochelatase (344 aa).

Residues His-214 and Glu-295 each contribute to the Fe cation site.

Belongs to the ferrochelatase family.

It is found in the cytoplasm. It catalyses the reaction heme b + 2 H(+) = protoporphyrin IX + Fe(2+). Its pathway is porphyrin-containing compound metabolism; protoheme biosynthesis; protoheme from protoporphyrin-IX: step 1/1. Catalyzes the ferrous insertion into protoporphyrin IX. The polypeptide is Ferrochelatase (Agrobacterium fabrum (strain C58 / ATCC 33970) (Agrobacterium tumefaciens (strain C58))).